Consider the following 143-residue polypeptide: MAMHFIFSDTAVLLFDFWSVHSPAGMALSVLVLLLLAVLYEGIKVGKAKLLNQVLVNLPTSISQQTIAETDGDSAGSDSFPVGRTHHRWYLCHFGQSLIHVIQVVIGYFIMLAVMSYNTWIFLGVVLGSAVGYYLAYPLLSTA.

The Extracellular segment spans residues 1–22; that stretch reads MAMHFIFSDTAVLLFDFWSVHS. Residues 23–43 form a helical membrane-spanning segment; the sequence is PAGMALSVLVLLLLAVLYEGI. Topologically, residues 44–93 are cytoplasmic; the sequence is KVGKAKLLNQVLVNLPTSISQQTIAETDGDSAGSDSFPVGRTHHRWYLCH. The residue at position 77 (Ser-77) is a Phosphoserine. A helical transmembrane segment spans residues 94 to 114; it reads FGQSLIHVIQVVIGYFIMLAV. Residues 115–119 lie on the Extracellular side of the membrane; it reads MSYNT. The chain crosses the membrane as a helical span at residues 120–140; that stretch reads WIFLGVVLGSAVGYYLAYPLL. Over 141-143 the chain is Cytoplasmic; sequence STA.

This sequence belongs to the copper transporter (Ctr) (TC 1.A.56) family. SLC31A subfamily. Oligomer. Interacts with SLC31A1; this interaction stabilizes SLC31A2 and protects it from ubiquitination and the subsequent degradation. Ubiquitinated; ubiquitination and the subsequent proteasomal degradation are prevent by SLC31A1 that stabilizes it. Ubiquitous with high expression in placenta and heart.

The protein localises to the membrane. The protein resides in the cytoplasmic vesicle membrane. It localises to the late endosome membrane. Its subcellular location is the lysosome membrane. In terms of biological role, does not function as a copper(1+) importer in vivo. However, in vitro functions as a low-affinity copper(1+) importer. Regulator of SLC31A1 which facilitates the cleavage of the SLC31A1 ecto-domain or which stabilizes the truncated form of SLC31A1 (Truncated CTR1 form), thereby drives the SLC31A1 truncated form-dependent endosomal copper export and modulates the copper and cisplatin accumulation via SLC31A1. The protein is Protein SLC31A2 of Homo sapiens (Human).